Consider the following 139-residue polypeptide: Large ribosomal subunit protein uL16c (139 aa).

Over residues 1–17 the composition is skewed to basic residues; sequence MLSPKKTKFRKQHRGRM. Residues 1–23 form a disordered region; it reads MLSPKKTKFRKQHRGRMKGSASK.

Belongs to the universal ribosomal protein uL16 family. Part of the 50S ribosomal subunit.

Its subcellular location is the plastid. It is found in the chloroplast. The sequence is that of Large ribosomal subunit protein uL16c from Porphyra purpurea (Red seaweed).